The following is a 65-amino-acid chain: Small ribosomal subunit protein bS21A (65 aa).

It belongs to the bacterial ribosomal protein bS21 family.

The sequence is that of Small ribosomal subunit protein bS21A from Francisella tularensis subsp. tularensis (strain FSC 198).